The chain runs to 291 residues: Proline iminopeptidase (291 aa).

The AB hydrolase-1 domain occupies 30–274; sequence LLIHGGPGSS…ANSRHLALLD (245 aa). The active-site Nucleophile is S103. D242 is an active-site residue. H269 serves as the catalytic Proton donor.

This sequence belongs to the peptidase S33 family.

Its subcellular location is the cell envelope. The catalysed reaction is Release of N-terminal proline from a peptide.. In terms of biological role, releases the N-terminal proline from various substrates. The protein is Proline iminopeptidase of Lacticaseibacillus rhamnosus (strain Lc 705) (Lactobacillus rhamnosus).